The primary structure comprises 1151 residues: MSRRKQSKPRQIKRPLEDAIEDEEEECPSEETDIISKGDFPLEESFSTEFGPENLSCEEVEYFCNKGDDEGIQETAESDGDTQSEKPGQPGVETDDWDGPGELEVFQKDGERKIQSRQQLPVGTTWGPFPGKMDLNNNSLKTKAQVPMVLTAGPKWLLDVTWQGVEDNKNNCIVYSKGGQLWCTTTKAISEGEELIAFVVDFDSRLQAASQMTLTEGMYPARLLDSIQLLPQQAAMASILPTAIVNKDIFPCKSCGIWYRSERNLQAHLMYYCSGRQREAAPVSEENEDSAHQISSLCPFPQCTKSFSNARALEMHLNSHSGVKMEEFLPPGASLKCTVCSYTADSVINFHQHLFSHLTQAAFRCNHCHFGFQTQRELLQHQELHVPSGKLPRESDMEHSPSATEDSLQPATDLLTRSELPQSQKAMQTKDASSDTELDKCEKKTQLFLTNQRPEIQPTTNKQSFSYTKIKSEPSSPRLASSPVQPNIGPSFPVGPFLSQFSFPQDITMVPQASEILAKMSELVHRRLRHGSSSYPPVIYSPLMPKGATCFECNITFNNLDNYLVHKKHYCSSRWQQMAKSPEFPSVSEKMPEALSPNTGQTSINLLNPAAHSADPENPLLQTSCINSSTVLDLIGPNGKGHDKDFSTQTKKLSTSSNNDDKINGKPVDVKNPSVPLVDGESDPNKTTCEACNITFSRHETYMVHKQYYCATRHDPPLKRSASNKVPAMQRTMRTRKRRKMYEMCLPEQEQRPPLVQQRFLDVANLNNPCTSTQEPTEGLGECYHPRCDIFPGIVSKHLETSLTINKCVPVSKCDTTHSSVSCLEMDVPIDLSKKCLSQSERTTTSPKRLLDYHECTVCKISFNKVENYLAHKQNFCPVTAHQRNDLGQLDGKVFPNPESERNSPDVSYERSIIKCEKNGNLKQPSPNGNLFSSHLATLQGLKVFSEAAQLIATKEENRHLFLPQCLYPGAIKKAKGADQLSPYYGIKPSDYISGSLVIHNTDIEQSRNAENESPKGQASSNGCAALKKDSLPLLPKNRGMVIVNGGLKQDERPAANPQQENISQNPQHEDDHKSPSWISENPLAANENVSPGIPSAEEQLSSIAKGVNGSSQAPTSGKYCRLCDIQFNNLSNFITHKKFYCSSHAAEHVK.

Basic residues predominate over residues M1–K13. The tract at residues M1 to E102 is disordered. 2 stretches are compositionally biased toward acidic residues: residues D18 to D33 and E70 to T82. The CCHC FOG-type 1 zinc finger occupies I244–Q277. Residues C252, C255, H268, and C273 each coordinate Zn(2+). The C2H2-type 1 zinc-finger motif lies at S296 to H320. Residue K324 forms a Glycyl lysine isopeptide (Lys-Gly) (interchain with G-Cter in SUMO1) linkage. 2 C2H2-type zinc fingers span residues L335–H357 and F363–H385. The tract at residues G389–N487 is disordered. Composition is skewed to polar residues over residues P401 to P410 and E419 to D431. A Glycyl lysine isopeptide (Lys-Gly) (interchain with G-Cter in SUMO2) cross-link involves residue K444. Over residues L447–Q485 the composition is skewed to polar residues. K471 participates in a covalent cross-link: Glycyl lysine isopeptide (Lys-Gly) (interchain with G-Cter in SUMO1). Position 532 is a phosphoserine (S532). The segment at P542–W575 adopts a CCHC FOG-type 2 zinc-finger fold. Residues C550, C553, H566, and C571 each coordinate Zn(2+). S581 is subject to Phosphoserine. Residues G636–D683 are disordered. Polar residues predominate over residues S647 to N658. A CCHC FOG-type 3 zinc finger spans residues E681–H714. Zn(2+) contacts are provided by C689, C692, H705, and C710. Residues R736–K740 carry the Nuclear localization signal motif. The interval P829 to K835 is interaction with CTBP2. Residues K848–A881 form a CCHC FOG-type 4 zinc finger. The Zn(2+) site is built by C856, C859, H872, and C877. Phosphoserine is present on S904. Residues K915 and K955 each participate in a glycyl lysine isopeptide (Lys-Gly) (interchain with G-Cter in SUMO1) cross-link. The residue at position 1014 (S1014) is a Phosphoserine. The segment at D1051–P1095 is disordered. Positions N1057–P1067 are enriched in polar residues. The segment at Q1113–A1146 adopts a CCHC FOG-type 5 zinc-finger fold. Positions 1121, 1124, 1137, and 1142 each coordinate Zn(2+).

It belongs to the FOG (Friend of GATA) family. Interacts with the N-terminal zinc-finger of GATA4, GATA5 and probably GATA6. Interacts with retinoid nuclear receptor RXRA when ligand bound. Interacts with corepressor CTBP2; this interaction is however not essential for corepressor activity. Able to bind GATA1 in vitro. Interacts with NR2F2 and NR2F6. Interacts with ATOH8; mediates indirect interaction with GATA4. Sumoylation reduces transcriptional repression activity. Widely expressed at low level.

Its subcellular location is the nucleus. Its function is as follows. Transcription regulator that plays a central role in heart morphogenesis and development of coronary vessels from epicardium, by regulating genes that are essential during cardiogenesis. Essential cofactor that acts via the formation of a heterodimer with transcription factors of the GATA family GATA4, GATA5 and GATA6. Such heterodimer can both activate or repress transcriptional activity, depending on the cell and promoter context. Also required in gonadal differentiation, possibly be regulating expression of SRY. Probably acts a corepressor of NR2F2. In Homo sapiens (Human), this protein is Zinc finger protein ZFPM2 (ZFPM2).